The sequence spans 347 residues: Involucrin (347 aa).

Disordered stretches follow at residues 1 to 43 and 56 to 347; these read MSQQ…LPAP and PLED…RRSL. Polar residues predominate over residues 27–36; sequence ADTQQEQVKQ. 2 stretches are compositionally biased toward low complexity: residues 70–114 and 138–161; these read VPEQ…QQES and DQQQQQESQVQELHVGHHQQQQES. 2 stretches are compositionally biased toward basic and acidic residues: residues 164 to 173 and 212 to 221; these read QELHVDHHQQ. Composition is skewed to low complexity over residues 222 to 241 and 265 to 285; these read QQESQVQELHVDHQQQQQES and DQQQQELQVQEVQQQQQQQQE. Residues 287–341 show a composition bias toward basic and acidic residues; it reads QEDHQKAEHLEQEEAQREQQLKGQLEQEKKGVYQHLDQELTKRDEHLEKKGEHCW.

Belongs to the involucrin family. In terms of assembly, directly or indirectly cross-linked to cornifelin (CNFN). Post-translationally, substrate of transglutaminase. Specific glutamines or lysines are cross-linked to keratins, desmoplakin and to inter involucrin molecules. As to expression, keratinocytes of epidermis and other stratified squamous epithelia.

The protein resides in the cytoplasm. Part of the insoluble cornified cell envelope (CE) of stratified squamous epithelia. The polypeptide is Involucrin (IVL) (Sus scrofa (Pig)).